The primary structure comprises 567 residues: Thiol:disulfide interchange protein DsbD (567 aa).

An N-terminal signal peptide occupies residues M1 to A19. 2 disulfides stabilise this stretch: C122–C128 and C185–C307. The next 8 helical transmembrane spans lie at L166 to V186, L210 to V230, Y246 to F266, I299 to I319, W326 to V346, W360 to L380, A387 to T407, and I418 to A438. The Thioredoxin domain occupies Q435–P567. Cysteines 482 and 485 form a disulfide.

It belongs to the thioredoxin family. DsbD subfamily.

Its subcellular location is the cell inner membrane. The enzyme catalyses [protein]-dithiol + NAD(+) = [protein]-disulfide + NADH + H(+). It carries out the reaction [protein]-dithiol + NADP(+) = [protein]-disulfide + NADPH + H(+). Its function is as follows. Required to facilitate the formation of correct disulfide bonds in some periplasmic proteins and for the assembly of the periplasmic c-type cytochromes. Acts by transferring electrons from cytoplasmic thioredoxin to the periplasm. This transfer involves a cascade of disulfide bond formation and reduction steps. This Salmonella choleraesuis (strain SC-B67) protein is Thiol:disulfide interchange protein DsbD.